The following is a 122-amino-acid chain: Ribosome-binding factor A (122 aa).

The protein belongs to the RbfA family. Monomer. Binds 30S ribosomal subunits, but not 50S ribosomal subunits or 70S ribosomes.

It localises to the cytoplasm. Its function is as follows. One of several proteins that assist in the late maturation steps of the functional core of the 30S ribosomal subunit. Associates with free 30S ribosomal subunits (but not with 30S subunits that are part of 70S ribosomes or polysomes). Required for efficient processing of 16S rRNA. May interact with the 5'-terminal helix region of 16S rRNA. This is Ribosome-binding factor A from Syntrophomonas wolfei subsp. wolfei (strain DSM 2245B / Goettingen).